The primary structure comprises 494 residues: Glutamyl-tRNA(Gln) amidotransferase subunit A, mitochondrial (494 aa).

Active-site charge relay system residues include Lys79 and Ser160. Ser184 functions as the Acyl-ester intermediate in the catalytic mechanism.

Belongs to the amidase family. GatA subfamily. As to quaternary structure, subunit of the heterotrimeric GatCAB amidotransferase (AdT) complex, composed of A, B and C subunits.

The protein localises to the mitochondrion. The enzyme catalyses L-glutamyl-tRNA(Gln) + L-glutamine + ATP + H2O = L-glutaminyl-tRNA(Gln) + L-glutamate + ADP + phosphate + H(+). Functionally, allows the formation of correctly charged Gln-tRNA(Gln) through the transamidation of misacylated Glu-tRNA(Gln) in the mitochondria. The reaction takes place in the presence of glutamine and ATP through an activated gamma-phospho-Glu-tRNA(Gln). The polypeptide is Glutamyl-tRNA(Gln) amidotransferase subunit A, mitochondrial (Aedes aegypti (Yellowfever mosquito)).